Consider the following 341-residue polypeptide: Probable membrane-associated kinase regulator 1 (341 aa).

Disordered stretches follow at residues 1 to 29 (MRRQ…FEFN), 67 to 122 (TLGS…SSRP), 158 to 185 (PKTN…KRMS), 206 to 230 (LSPK…NNIR), and 288 to 310 (RGGF…SVSS). 3 stretches are compositionally biased toward low complexity: residues 12–29 (PPQS…FEFN), 67–108 (TLGS…SFPL), and 167–180 (SSSS…APSS). Polar residues predominate over residues 208-230 (PKQSSNIKTESSSSLKDSGNNIR). Residues 297–310 (SCSSSSSNNNSVSS) are compositionally biased toward low complexity.

In terms of assembly, a C-terminus-derived peptide binds BRI1 in vitro.

The protein localises to the cell membrane. In terms of biological role, may negatively regulate brassinosteroid signaling. This is Probable membrane-associated kinase regulator 1 (MAKR1) from Arabidopsis thaliana (Mouse-ear cress).